Here is a 167-residue protein sequence, read N- to C-terminus: Plastocyanin major isoform, chloroplastic (167 aa).

A chloroplast-targeting transit peptide spans 1 to 52 (MASVTSATVAIPSFTGLKASTIKSSATVRIQTAAVASPKLTVKSSLKNFGVA). The transit peptide at 53-68 (AVAAAASIALAGNAMA) directs the protein to the thylakoid. Residues 69-167 (IEVLLGGGDG…AGMVGKVTVN (99 aa)) form the Plastocyanin-like domain. Cu cation-binding residues include His105, Cys152, His155, and Met160.

This sequence belongs to the plastocyanin family. The cofactor is Cu(2+).

The protein localises to the plastid. It is found in the chloroplast thylakoid membrane. In terms of biological role, participates in electron transfer between P700 and the cytochrome b6-f complex in photosystem I. Seems to be the major plastocyanin in Arabidopsis. This chain is Plastocyanin major isoform, chloroplastic (DRT112), found in Arabidopsis thaliana (Mouse-ear cress).